A 618-amino-acid chain; its full sequence is MSHVRGLGLPGCLALAALVSLVHSQHVFLAPQQALSLLQRVRRANSGFLEELRKGNLERECVEEQCSYEEAFEALESPQDTDVFWAKYTVCDSVRKPRETFMDCLEGRCAMDLGVNYLGTVNVTHTGIQCQLWRSRYPHKPEINSTTHPGADLKENFCRNPDSSTTGPWCYTTDPTVRREECSVPVCGQEGRTTVVMTPRSGGSKDNLSPPLGQCLTERGRLYQGNLAVTTLGSPCLPWNSLPAKTLSKYQDFDPEVKLVENFCRNPDWDEEGAWCYVAGQPGDFEYCNLNYCEEAVGEENYDVDESIAGRTTDAEFHTFFNEKTFGLGEADCGLRPLFEKKSLKDTTEKELLDSYIDGRIVEGWDAEKGIAPWQVMLFRKSPQELLCGASLISDRWVLTAAHCILYPPWDKNFTENDLLVRIGKHSRTRYERNVEKISMLEKIYVHPRYNWRENLDRDIALLKLKKPVPFSDYIHPVCLPDKQTVTSLLRAGYKGRVTGWGNLRETWTTNINEIQPSVLQVVNLPIVERPVCKASTRIRITDNMFCAGFKVNDTKRGDACEGDSGGPFVMKSPFNNRWYQMGIVSWGEGCDRKGKYGFYTHVFRLKRWIQKVIDQFG.

An N-terminal signal peptide occupies residues 1–24; it reads MSHVRGLGLPGCLALAALVSLVHS. Positions 25-43 are excised as a propeptide; that stretch reads QHVFLAPQQALSLLQRVRR. Positions 44–90 constitute a Gla domain; it reads ANSGFLEELRKGNLERECVEEQCSYEEAFEALESPQDTDVFWAKYTV. Residues Glu50, Glu51, Glu58, Glu60, Glu63, Glu64, Glu69, Glu70, Glu73, and Glu76 each carry the 4-carboxyglutamate modification. Cys61 and Cys66 are joined by a disulfide. 10 disulfide bridges follow: Cys91–Cys104, Cys109–Cys187, Cys130–Cys170, Cys158–Cys182, Cys215–Cys293, Cys236–Cys276, Cys264–Cys288, Cys333–Cys479, Cys388–Cys404, and Cys533–Cys547. 2 consecutive Kringle domains span residues 109 to 187 and 215 to 292; these read CAMD…VPVC and CLTE…NLNY. N-linked (GlcNAc...) asparagine glycosylation is found at Asn122 and Asn144. A Peptidase S1 domain is found at 361 to 615; the sequence is IVEGWDAEKG…LKRWIQKVID (255 aa). The active-site Charge relay system is the His403. The N-linked (GlcNAc...) asparagine glycan is linked to Asn413. The active-site Charge relay system is the Asp459. The segment at 548–570 is high affinity receptor-binding region which is also known as the TP508 peptide; sequence AGFKVNDTKRGDACEGDSGGPFV. N-linked (GlcNAc...) asparagine glycosylation is present at Asn553. Cys561 and Cys591 are oxidised to a cystine. Residue Ser565 is the Charge relay system of the active site.

Belongs to the peptidase S1 family. Heterodimer (named alpha-thrombin) of a light and a heavy chain; disulfide-linked. Forms a heterodimer with SERPINA5. In plasma, interacts (via N-terminus) with alpha-1-microglobulin; this interaction does not prevent the activation of prothrombin to thrombin. Post-translationally, the gamma-carboxyglutamyl residues, which bind calcium ions, result from the carboxylation of glutamyl residues by a microsomal enzyme, the vitamin K-dependent carboxylase. The modified residues are necessary for the calcium-dependent interaction with a negatively charged phospholipid surface, which is essential for the conversion of prothrombin to thrombin. In the penultimate step of the coagulation cascade, prothrombin is converted to thrombin by the prothrombinase complex composed of factor Xa (F10), cofactor Va (F5), and phospholipids. This activation requires factor Xa-catalyzed sequential cleavage at 2 sites, Arg-311 and Arg-360, along 2 possible pathways. In the first pathway, the first cleavage occurs at Arg-311, leading to the formation of the inactive intermediate prethrombin-2. This pathway preferentially occurs on platelets and in the absence of cofactor Va. In the second pathway, the first cleavage occurs at Arg-360, which separates protease domain into 2 chains that remain connected through a disulfide bond and generates the active intermediate meizothrombin. The presence of cofactor Va directs activation along the meizothrombin pathway and greatly accelerates the rate of cleavage at Arg-360, but has a smaller effect on the cleavage of meizothrombin at Arg-311. Meizothrombin accumulates as an intermediate when prothrombinase is assembled on the membrane of red blood cells.

The catalysed reaction is Selective cleavage of Arg-|-Gly bonds in fibrinogen to form fibrin and release fibrinopeptides A and B.. With respect to regulation, activity is promoted in the presence of negatively charged surfaces, such as polyphosphate and dextran sulfate. Inhibited by SERPINA5. In terms of biological role, thrombin, which cleaves bonds after Arg and Lys, converts fibrinogen to fibrin and activates factors V, VII, VIII, XIII, and, in complex with thrombomodulin, protein C. Functions in blood homeostasis, inflammation and wound healing. Activates coagulation factor XI (F11); activation is promoted by the contact with negatively charged surfaces. Triggers the production of pro-inflammatory cytokines, such as MCP-1/CCL2 and IL8/CXCL8, in endothelial cells. This chain is Prothrombin (F2), found in Mus musculus (Mouse).